Consider the following 388-residue polypeptide: GTPase Obg (388 aa).

Residues 1-159 form the Obg domain; that stretch reads MKFVDEAVIR…RSLKLELLLL (159 aa). One can recognise an OBG-type G domain in the interval 160-333; it reads ADVGLLGMPN…LATKLLDFIQ (174 aa). Residues 166-173, 191-195, 213-216, 283-286, and 314-316 contribute to the GTP site; these read GMPNAGKS, FTTLV, DIPG, NKAD, and SAY. Ser173 and Thr193 together coordinate Mg(2+).

The protein belongs to the TRAFAC class OBG-HflX-like GTPase superfamily. OBG GTPase family. Monomer. The cofactor is Mg(2+).

The protein localises to the cytoplasm. An essential GTPase which binds GTP, GDP and possibly (p)ppGpp with moderate affinity, with high nucleotide exchange rates and a fairly low GTP hydrolysis rate. Plays a role in control of the cell cycle, stress response, ribosome biogenesis and in those bacteria that undergo differentiation, in morphogenesis control. The polypeptide is GTPase Obg (Shewanella sp. (strain MR-4)).